A 567-amino-acid chain; its full sequence is 2-succinyl-5-enolpyruvyl-6-hydroxy-3-cyclohexene-1-carboxylate synthase (567 aa).

Belongs to the TPP enzyme family. MenD subfamily. In terms of assembly, homodimer. It depends on Mg(2+) as a cofactor. The cofactor is Mn(2+). Thiamine diphosphate is required as a cofactor.

The enzyme catalyses isochorismate + 2-oxoglutarate + H(+) = 5-enolpyruvoyl-6-hydroxy-2-succinyl-cyclohex-3-ene-1-carboxylate + CO2. The protein operates within quinol/quinone metabolism; 1,4-dihydroxy-2-naphthoate biosynthesis; 1,4-dihydroxy-2-naphthoate from chorismate: step 2/7. Its pathway is quinol/quinone metabolism; menaquinone biosynthesis. Its function is as follows. Catalyzes the thiamine diphosphate-dependent decarboxylation of 2-oxoglutarate and the subsequent addition of the resulting succinic semialdehyde-thiamine pyrophosphate anion to isochorismate to yield 2-succinyl-5-enolpyruvyl-6-hydroxy-3-cyclohexene-1-carboxylate (SEPHCHC). This is 2-succinyl-5-enolpyruvyl-6-hydroxy-3-cyclohexene-1-carboxylate synthase from Yersinia pseudotuberculosis serotype IB (strain PB1/+).